The sequence spans 37 residues: Large ribosomal subunit protein bL36c (37 aa).

Belongs to the bacterial ribosomal protein bL36 family.

The protein resides in the plastid. Its subcellular location is the cyanelle. In Cyanophora paradoxa, this protein is Large ribosomal subunit protein bL36c (rpl36).